Here is a 715-residue protein sequence, read N- to C-terminus: Palmitoyltransferase ZDHHC5 (715 aa).

The Cytoplasmic portion of the chain corresponds to M1 to K13. Residues Y14–F34 traverse the membrane as a helical segment. At T35 to A52 the chain is on the extracellular side. Residues I53–F73 traverse the membrane as a helical segment. Residues P74–Y148 are Cytoplasmic-facing. Y91 carries the post-translational modification Phosphotyrosine. The region spanning K104–L154 is the DHHC domain. C134 acts as the S-palmitoyl cysteine intermediate in catalysis. Residues F149–L169 form a helical membrane-spanning segment. Topologically, residues Y170–C191 are extracellular. The helical transmembrane segment at V192–A212 threads the bilayer. At R213 to V715 the chain is on the cytoplasmic side. S247 carries the post-translational modification Phosphoserine. The tract at residues G289–V715 is disordered. Phosphothreonine is present on T294. 2 positions are modified to phosphoserine: S296 and S299. T303 bears the Phosphothreonine mark. S345 is modified (phosphoserine). T348 and T350 each carry phosphothreonine. The span at S359–A373 shows a compositional bias: low complexity. Residues S380, S398, S406, and S409 each carry the phosphoserine modification. Phosphothreonine is present on T411. S415, S425, S429, and S432 each carry phosphoserine. Positions S422–S432 are enriched in low complexity. A Phosphothreonine modification is found at T436. Residues Q442–D478 are compositionally biased toward polar residues. Phosphoserine occurs at positions 529 and 554. Over residues P581 to K597 the composition is skewed to low complexity. The residue at position 617 (R617) is an Omega-N-methylarginine. S621 is modified (phosphoserine). Position 659 is a phosphothreonine (T659). Residues L666–P677 show a composition bias toward polar residues. Residues S684 and S694 each carry the phosphoserine modification. R697 carries the post-translational modification Omega-N-methylarginine.

The protein belongs to the DHHC palmitoyltransferase family. ERF2/ZDHHC9 subfamily. Post-translationally, autopalmitoylated. Palmitoylation of the C-terminal tail regulates stimulation-dependent plasma membrane motility. Phosphorylation regulates association with endocytic proteins and its subcellular localization. Phosphorylation by LYN during fatty acid uptake leads to inactivation of the activity.

The protein resides in the cell membrane. It carries out the reaction L-cysteinyl-[protein] + hexadecanoyl-CoA = S-hexadecanoyl-L-cysteinyl-[protein] + CoA. Palmitoyltransferase that catalyzes the addition of palmitate onto various protein substrates such as CTNND2, CD36, GSDMD, NLRP3, NOD1, NOD2, STAT3 and S1PR1 thus plays a role in various biological processes including cell adhesion, inflammation, fatty acid uptake, bacterial sensing or cardiac functions. Plays an important role in the regulation of synapse efficacy by mediating palmitoylation of delta-catenin/CTNND2, thereby increasing synaptic delivery and surface stabilization of alpha-amino-3-hydroxy-5-methyl-4-isoxazole propionic acid receptors (AMPARs). Under basal conditions, remains at the synaptic membrane through FYN-mediated phosphorylation that prevents association with endocytic proteins. Neuronal activity enhances the internalization and trafficking of DHHC5 from spines to dendritic shafts where it palmitoylates delta-catenin/CTNND2. Regulates cell adhesion at the plasma membrane by palmitoylating GOLGA7B and DSG2. Plays a role in innate immune response by mediating the palmitoylation of NOD1 and NOD2 and their proper recruitment to the bacterial entry site and phagosomes. Also participates in fatty acid uptake by palmitoylating CD36 and thereby targeting it to the plasma membrane. Upon binding of fatty acids to CD36, gets phosphorylated by LYN leading to inactivation and subsequent CD36 caveolar endocytosis. Controls oligodendrocyte development by catalyzing STAT3 palmitoylation. Acts as a regulator of inflammatory response by mediating palmitoylation of NLRP3 and GSDMD. Palmitoylates NLRP3 to promote inflammasome assembly and activation. Activates pyroptosis by catalyzing palmitoylation of gasdermin-D (GSDMD), thereby promoting membrane translocation and pore formation of GSDMD. This Rattus norvegicus (Rat) protein is Palmitoyltransferase ZDHHC5 (Zdhhc5).